The following is a 216-amino-acid chain: ATP-dependent dethiobiotin synthetase BioD (216 aa).

Position 12–17 (12–17 (GVGKSY)) interacts with ATP. Mg(2+) is bound at residue S16. K37 is a catalytic residue. T41 is a substrate binding site. The Mg(2+) site is built by H53 and E115. 115 to 118 (EGAG) lines the ATP pocket.

The protein belongs to the dethiobiotin synthetase family. Homodimer. Mg(2+) is required as a cofactor.

The protein localises to the cytoplasm. It catalyses the reaction (7R,8S)-7,8-diammoniononanoate + CO2 + ATP = (4R,5S)-dethiobiotin + ADP + phosphate + 3 H(+). It participates in cofactor biosynthesis; biotin biosynthesis; biotin from 7,8-diaminononanoate: step 1/2. In terms of biological role, catalyzes a mechanistically unusual reaction, the ATP-dependent insertion of CO2 between the N7 and N8 nitrogen atoms of 7,8-diaminopelargonic acid (DAPA, also called 7,8-diammoniononanoate) to form a ureido ring. The polypeptide is ATP-dependent dethiobiotin synthetase BioD (Wolinella succinogenes (strain ATCC 29543 / DSM 1740 / CCUG 13145 / JCM 31913 / LMG 7466 / NCTC 11488 / FDC 602W) (Vibrio succinogenes)).